Reading from the N-terminus, the 772-residue chain is Heat shock protein 88 (772 aa).

Disordered stretches follow at residues 496 to 519 and 729 to 772; these read TAAPAETPAETPANGEAAKPAEEK and LGKP…DILD. Low complexity predominate over residues 497–513; the sequence is AAPAETPAETPANGEAA. A compositionally biased stretch (basic and acidic residues) spans 735-772; it reads KPVEVPKEEPKDTPMESKDAPAEEPVATKDQKMDDILD.

This sequence belongs to the heat shock protein 70 family.

Its function is as follows. May function in protein folding and assembly, and disassembly of protein complexes. The polypeptide is Heat shock protein 88 (hspH) (Dictyostelium discoideum (Social amoeba)).